Consider the following 85-residue polypeptide: Toxin BmKITc (85 aa).

The N-terminal stretch at 1–21 (MKLFLLLVIFASMLNDGLVNA) is a signal peptide. Residues 22-82 (DGYIRGSDGC…KWKYESNTCG (61 aa)) enclose the LCN-type CS-alpha/beta domain. Intrachain disulfides connect Cys-31/Cys-81, Cys-35/Cys-56, Cys-42/Cys-63, and Cys-46/Cys-65.

Belongs to the long (4 C-C) scorpion toxin superfamily. Sodium channel inhibitor family. Beta subfamily. In terms of tissue distribution, expressed by the venom gland.

It localises to the secreted. In terms of biological role, depressant insect beta-toxins cause a transient contraction paralysis followed by a slow flaccid paralysis. They bind voltage-independently at site-4 of sodium channels (Nav) and shift the voltage of activation toward more negative potentials thereby affecting sodium channel activation and promoting spontaneous and repetitive firing. The protein is Toxin BmKITc of Olivierus martensii (Manchurian scorpion).